The sequence spans 397 residues: Aspartate/prephenate aminotransferase (397 aa).

3 residues coordinate L-aspartate: Gly38, Trp124, and Asn174. N6-(pyridoxal phosphate)lysine is present on Lys238. Position 375 (Arg375) interacts with L-aspartate.

Belongs to the class-I pyridoxal-phosphate-dependent aminotransferase family. Homodimer. The cofactor is pyridoxal 5'-phosphate.

It is found in the cytoplasm. It carries out the reaction L-aspartate + 2-oxoglutarate = oxaloacetate + L-glutamate. It catalyses the reaction L-arogenate + 2-oxoglutarate = prephenate + L-glutamate. In terms of biological role, catalyzes the reversible conversion of aspartate and 2-oxoglutarate to glutamate and oxaloacetate. Can also transaminate prephenate in the presence of glutamate, with lower efficiency. The chain is Aspartate/prephenate aminotransferase from Nitrosomonas europaea (strain ATCC 19718 / CIP 103999 / KCTC 2705 / NBRC 14298).